The primary structure comprises 231 residues: Large ribosomal subunit protein uL1 (231 aa).

This sequence belongs to the universal ribosomal protein uL1 family. As to quaternary structure, part of the 50S ribosomal subunit.

Its function is as follows. Binds directly to 23S rRNA. The L1 stalk is quite mobile in the ribosome, and is involved in E site tRNA release. In terms of biological role, protein L1 is also a translational repressor protein, it controls the translation of the L11 operon by binding to its mRNA. In Azotobacter vinelandii (strain DJ / ATCC BAA-1303), this protein is Large ribosomal subunit protein uL1.